The primary structure comprises 156 residues: Ribosomal RNA large subunit methyltransferase H (156 aa).

Residues leucine 73, glycine 104, and 123–128 (LSSLTL) each bind S-adenosyl-L-methionine.

Belongs to the RNA methyltransferase RlmH family. In terms of assembly, homodimer.

It localises to the cytoplasm. It catalyses the reaction pseudouridine(1915) in 23S rRNA + S-adenosyl-L-methionine = N(3)-methylpseudouridine(1915) in 23S rRNA + S-adenosyl-L-homocysteine + H(+). Specifically methylates the pseudouridine at position 1915 (m3Psi1915) in 23S rRNA. In Bordetella petrii (strain ATCC BAA-461 / DSM 12804 / CCUG 43448), this protein is Ribosomal RNA large subunit methyltransferase H.